A 140-amino-acid chain; its full sequence is MEDPIKAIEEIFKKADQIFKFLDVKVINLEKGRAVVEIPYKEEFTRRGGVLHGGIIMSAIDITGGLAALTVNDAMDQVTQELKINFLEPMYKGPFTIEGKVLRKGSTVIVVEIEFKDADGKLGAKAIGSWYILRTKVQAK.

It belongs to the thioesterase PaaI family.

This is Putative esterase SSO2140 from Saccharolobus solfataricus (strain ATCC 35092 / DSM 1617 / JCM 11322 / P2) (Sulfolobus solfataricus).